Consider the following 673-residue polypeptide: Protein VirD3 (673 aa).

Disordered regions lie at residues 36 to 73 (VAGEDGRDTSVPTALSRPPIEDMPHGVQETSASGGRLG), 171 to 216 (SPVN…GTSV), 229 to 409 (ERDT…LRSS), 478 to 497 (RLNGERSRSPKTSQASLEDF), 520 to 552 (EKGKQKISTEADTRFDLGNSSAPRVSPRSVTPL), and 585 to 673 (DSSR…GCGR). Polar residues-rich tracts occupy residues 171 to 183 (SPVNRAAHSSNWQ), 193 to 216 (VQPSADRAQNSAQESSTFPDGTSV), 234 to 246 (SETTRNSGNTISS), and 268 to 277 (QSLSVTVTTP). Positions 278 to 287 (NSNAEASSHS) are enriched in low complexity. Basic and acidic residues predominate over residues 288-303 (AHTETLDDVSSDRSSE). Composition is skewed to basic and acidic residues over residues 520–534 (EKGKQKISTEADTRF) and 638–673 (AAEHSAIDDIWKRDDRDRRTHPYRGLDSRSREGCGR).

The protein is Protein VirD3 (virD3) of Agrobacterium fabrum (strain C58 / ATCC 33970) (Agrobacterium tumefaciens (strain C58)).